The sequence spans 1308 residues: MALSISTLNTNGCRNPFRMFQVLSFLRQGGYSVSFLQETHTTPELEASWNLEWKGRVFFNHLTWTSCGVVTLFSDSFQPEVLSATSVIPGRLLHLRVRESGRTYNLMNVYAPTTGPERARFFESLSAYMETIDSDEALIIGGDFNYTLDARDRNVPKKRDSSESVLRELIAHFSLVDVWREQNPETVAFTYVRVRDGHVSQSRIDRIYISSHLMSRAQSSTIRLAPFSDHNCVSLRMSIAPSLPKAAYWHFNNSLLEDEGFAKSVRDTWRGWRAFQDEFATLNQWWDVGKVHLKLLCQEYTKSVSGQRNAEIEALNGEVLDLEQRLSGSEDQALQCEYLERKEALRNMEQRQARGAFVRSRMQLLCDMDRGSRFFYALEKKKGNRKQITCLFAEDGTPLEDPEAIRDRARSFYQNLFSPDPISPDACEELWDGLPVVSERRKERLETPITLDELSQALRLMPHNKSPGLDGLTIEFFQFFWDTLGPDFHRVLTEAFKKGELPLSCRRAVLSLLPKKGDLRLIKNWRPVSLLSTDYKIVAKAISLRLKSVLAEVIHPDQSYTVPGRTIFDNVFLIRDLLHFARRTGLSLAFLSLDQEKAFDRVDHQYLIGTLQAYSFGPQFVGYLKTMYASAECLVKINWSLTAPLAFGRGVRQGCPLSGQLYSLAIEPFLCLLRKRLTGLVLKEPDMRVVLSAYADDVILVAQDLVDLERAQECQEVYAAASSARINWSKSSGLLEGSLKVDFLPPAFRDISWESKIIKYLGVYLSAEEYPVSQNFIELEECVLTRLGKWKGFAKVLSMRGRALVINQLVASQIWYRLICLSPTQEFIAKIQRRLLDFLWIGKHWVSAGVSSLPLKEGGQGVVCIRSQVHTFRLQQIQRYLYADPSPQWCTLASSFYRQVRNMGYDRQLFIIEPEGFLRNLSTLPAYYQDTLKTWSMVSVLRQGATEGEDILNEPLLYNPSFKTRMLESISIRRRLCQAQLTRVGDLLDFEKSDWVDSQAVMQRMGFLTTRVPHRLLKEIKDTISPDSHTFIDGVLHAGEPRPPWNSSPPDIIIAPKTRQSPQAPPSPNLSQLENFPLTRFHDITRKLLYSLMLHTVHFLALISRYDTIWRRVLNEGERPQWRAFYSSLVPRPTGDLSWKVLHGALSTGEYLARFTDSPAACPFCGKGESVFHAYFTCARLQPLLALLRKLYLQFWLHFSPHVYIFGRPVSRDNKEKDLLSNLLLALAKLVIHKSRKQCLEGGNPLPAEVLFRVLVRSRIRAEYTQAVFTGRLKEFADQWAIDGVLCSVSPDLVSVQTILTLPYLSAL.

The 272-residue stretch at 494-765 folds into the Reverse transcriptase domain; it reads EAFKKGELPL…KIIKYLGVYL (272 aa).

This is Transposon TX1 uncharacterized 149 kDa protein from Xenopus laevis (African clawed frog).